A 448-amino-acid polypeptide reads, in one-letter code: MGKYFGTDGVRGVANKELTPELAFKIGRFGGYVLTKDTDRPKVIIGRDTRVSGHMLEGALVAGLLSTGAEVMRLGVISTPGVAYLTKALGAQAGVMISASHNPVQDNGIKFFGSDGFKLTDEQEAEIEALLDKEVDELPRPTGTNLGQVSDYFEGGQKYLQYIKQTVEEDFSGLHIALDCAHGATSSLAPYLFADLEADISTMGTSPNGMNINAGVGSTHPEVLAELVKEKGADIGLAFDGDGDRLIAVDEKGNIVDGDQIMFICAKYMKETGQLKHNTVVSTVMSNLGFYKALEANNITSDKTAVGDRYVMEEMKRGGYNLGGEQSGHIILLDYITTGDGMLSALQLVNIMKMTKKPLSELAGEMTKFPQLLVNVRVTDKKLALENEKIKEIIRVVEEEMNGDGRILVRPSGTEPLIRVMAEAPTQEICDGYVHRIVEVVKAEVGAE.

Residue serine 100 is the Phosphoserine intermediate of the active site. Mg(2+) contacts are provided by serine 100, aspartate 240, aspartate 242, and aspartate 244. At serine 100 the chain carries Phosphoserine.

The protein belongs to the phosphohexose mutase family. The cofactor is Mg(2+). Activated by phosphorylation.

It carries out the reaction alpha-D-glucosamine 1-phosphate = D-glucosamine 6-phosphate. Its function is as follows. Catalyzes the conversion of glucosamine-6-phosphate to glucosamine-1-phosphate. This Bacillus mycoides (strain KBAB4) (Bacillus weihenstephanensis) protein is Phosphoglucosamine mutase.